The following is a 266-amino-acid chain: Imidazole glycerol phosphate synthase subunit HisF (266 aa).

Catalysis depends on residues D11 and D130.

This sequence belongs to the HisA/HisF family. Heterodimer of HisH and HisF.

It is found in the cytoplasm. The catalysed reaction is 5-[(5-phospho-1-deoxy-D-ribulos-1-ylimino)methylamino]-1-(5-phospho-beta-D-ribosyl)imidazole-4-carboxamide + L-glutamine = D-erythro-1-(imidazol-4-yl)glycerol 3-phosphate + 5-amino-1-(5-phospho-beta-D-ribosyl)imidazole-4-carboxamide + L-glutamate + H(+). Its pathway is amino-acid biosynthesis; L-histidine biosynthesis; L-histidine from 5-phospho-alpha-D-ribose 1-diphosphate: step 5/9. Its function is as follows. IGPS catalyzes the conversion of PRFAR and glutamine to IGP, AICAR and glutamate. The HisF subunit catalyzes the cyclization activity that produces IGP and AICAR from PRFAR using the ammonia provided by the HisH subunit. The protein is Imidazole glycerol phosphate synthase subunit HisF of Nitrosopumilus maritimus (strain SCM1).